The sequence spans 464 residues: ATP synthase subunit beta 1 (464 aa).

153–160 (GGAGVGKT) contacts ATP.

It belongs to the ATPase alpha/beta chains family. As to quaternary structure, F-type ATPases have 2 components, CF(1) - the catalytic core - and CF(0) - the membrane proton channel. CF(1) has five subunits: alpha(3), beta(3), gamma(1), delta(1), epsilon(1). CF(0) has three main subunits: a(1), b(2) and c(9-12). The alpha and beta chains form an alternating ring which encloses part of the gamma chain. CF(1) is attached to CF(0) by a central stalk formed by the gamma and epsilon chains, while a peripheral stalk is formed by the delta and b chains.

The protein resides in the cell inner membrane. The catalysed reaction is ATP + H2O + 4 H(+)(in) = ADP + phosphate + 5 H(+)(out). Functionally, produces ATP from ADP in the presence of a proton gradient across the membrane. The catalytic sites are hosted primarily by the beta subunits. This is ATP synthase subunit beta 1 from Burkholderia mallei (strain SAVP1).